The following is a 629-amino-acid chain: DNA-directed RNA polymerase III subunit rpc3 (629 aa).

Disordered stretches follow at residues 136-164 (ANGVPEEHGEHEEDEEQSNGLNGEHSNEQ), 247-294 (PRGA…EMGY), and 373-420 (QLDL…SGGN). A compositionally biased stretch (basic and acidic residues) spans 257–268 (RRADEPNKKCRT). Residues 272–293 (SVDENDEHDEEEENEWSDDEMG) show a composition bias toward acidic residues. Residues 374-388 (LDLSSSTGPMDSSQP) are compositionally biased toward polar residues. Residues 389–409 (DGRRGKRPWDGDVEGTNHEEA) show a composition bias toward basic and acidic residues. The segment at 556–577 (TYKAMSRCLQRLRFERSRIKDF) is leucine-zipper.

It belongs to the RNA polymerase beta chain family. As to quaternary structure, component of the RNA polymerase III (Pol III) complex consisting of 17 subunits.

Its subcellular location is the nucleus. In terms of biological role, DNA-dependent RNA polymerase catalyzes the transcription of DNA into RNA using the four ribonucleoside triphosphates as substrates. Specific core component of RNA polymerase III which synthesizes small RNAs, such as 5S rRNA and tRNAs. This is DNA-directed RNA polymerase III subunit rpc3 (rpc82) from Aspergillus fumigatus (strain ATCC MYA-4609 / CBS 101355 / FGSC A1100 / Af293) (Neosartorya fumigata).